The sequence spans 192 residues: Thiosulfate reductase electron transfer subunit PhsB (192 aa).

4Fe-4S ferredoxin-type domains follow at residues 8–36, 55–86, and 87–116; these read YVML…VPEG, THFQ…RDEN, and GIVQ…LNPQ. [4Fe-4S] cluster is bound by residues Cys17, Cys20, Cys23, Cys27, Cys64, Cys67, Cys72, Cys76, Cys96, Cys99, Cys102, Cys106, Cys123, Cys126, Cys139, and Cys143.

Composed of three subunits: PhsA, PhsB and PhsC. The cofactor is [4Fe-4S] cluster.

The protein resides in the cell inner membrane. In terms of biological role, component of the PhsABC thiosulfate reductase that catalyzes the reduction of thiosulfate to sulfite and hydrogen sulfide, with menaquinol as the sole electron donor. Proton motive force (PMF) is required to drive transmembrane electron transfer within the reductase. The PhsB subunit transfers electrons between PhsC and PhsA. The polypeptide is Thiosulfate reductase electron transfer subunit PhsB (phsB) (Salmonella typhi).